A 471-amino-acid polypeptide reads, in one-letter code: MKPIVAIVGRPNVGKSTLFNRLTQSRHAIVEDQPGVTRDRLYADTEWNGRTLTLVDTGGIQLDKEGDTIEAHVTRQAELAIREADVIIFVVDVTDGVTAPDLEVADLLRRQRKPVIVAVNKVENLKREDEALEFWALGLEPLINVSAEHGLGTGDLLDAVVAALPDLSEPEPEEGGPVRVAVIGRPNVGKSSLVNAILGEERVIVSDVPGTTRDAIDVLVERGEDKFLLIDTAGMRRKARVEEAVERYSVMRALRAVERAQVVLIVIDAQDGVTEQDQRIAGYAHENGKACIVVVNKWDLIEKDDRTMAKMTEEVRMRLAFMDYAMIHFVSAKTRARVHRLLPLIKEAAANHARRISTRELNDLVREAVALNPPPSDKGRRLKIFYATQPHVSPPGFVFFVNDSELVHFSYQRYLENQLRQTYAFEGTPINLYFRTREKAKLGERPVRVRRVLAGGQTREIRRAARKRSTE.

EngA-type G domains follow at residues 3 to 168 and 178 to 353; these read PIVA…PDLS and VRVA…ANHA. GTP-binding positions include 9–16, 56–60, 120–123, 184–191, 231–235, and 296–299; these read GRPNVGKS, DTGGI, NKVE, DTAGM, and NKWD. Positions 354–438 constitute a KH-like domain; sequence RRISTRELND…PINLYFRTRE (85 aa).

Belongs to the TRAFAC class TrmE-Era-EngA-EngB-Septin-like GTPase superfamily. EngA (Der) GTPase family. Associates with the 50S ribosomal subunit.

GTPase that plays an essential role in the late steps of ribosome biogenesis. This Symbiobacterium thermophilum (strain DSM 24528 / JCM 14929 / IAM 14863 / T) protein is GTPase Der.